A 753-amino-acid polypeptide reads, in one-letter code: Rsm22-cox11 tandem protein 2, mitochondrial (753 aa).

Residues 1-39 constitute a mitochondrion transit peptide; the sequence is MPILTCRYKILFLYNLRNCFTFQNQRCLIPYGTTTTIRW. [4Fe-4S] cluster contacts are provided by cysteine 323, cysteine 329, cysteine 342, and cysteine 430. The chain crosses the membrane as a helical span at residues 571-591; that stretch reads IYYLVAISIFALGLTYAAVPL. The Mitochondrial intermembrane portion of the chain corresponds to 592 to 753; that stretch reads YRLFCSKTGY…TNGNLLTKLN (162 aa).

This sequence in the N-terminal section; belongs to the methyltransferase superfamily. Rsm22 family. The protein in the C-terminal section; belongs to the COX11/CtaG family. In terms of assembly, associates with the mitochondrial ribosome (mitoribosome). Only transiently interacts with the mitoribosome. Post-translationally, specific enzymatic cleavages in vivo by mitochondrial processing peptidase (MPP) yield mature proteins including rsm22-2 and cox11-2.

Its subcellular location is the mitochondrion. It is found in the mitochondrion inner membrane. In terms of biological role, mitochondrial ribosome (mitoribosome) assembly factor. Binds at the interface of the head and body domains of the mitochondrial small ribosomal subunit (mt-SSU), occluding the mRNA channel and preventing compaction of the head domain towards the body. Probable inactive methyltransferase: retains the characteristic folding and ability to bind S-adenosyl-L-methionine, but it probably lost its methyltransferase activity. Exerts its effect at some terminal stage of cytochrome c oxidase synthesis, probably by being involved in the insertion of the copper B into subunit I. This is Rsm22-cox11 tandem protein 2, mitochondrial (cox1102) from Schizosaccharomyces pombe (strain 972 / ATCC 24843) (Fission yeast).